Reading from the N-terminus, the 424-residue chain is S-adenosylmethionine synthase (424 aa).

His14 provides a ligand contact to ATP. Asp16 serves as a coordination point for Mg(2+). Residue Glu42 coordinates K(+). Glu55 and Gln98 together coordinate L-methionine. The tract at residues 98 to 108 (QSNDISRGIER) is flexible loop. ATP is bound by residues 165–167 (DAK), 242–243 (KF), Asp251, 257–258 (RK), Ala274, and Lys278. Residue Asp251 participates in L-methionine binding. An L-methionine-binding site is contributed by Lys282.

Belongs to the AdoMet synthase family. Homotetramer; dimer of dimers. The cofactor is Mg(2+). It depends on K(+) as a cofactor.

The protein localises to the cytoplasm. The enzyme catalyses L-methionine + ATP + H2O = S-adenosyl-L-methionine + phosphate + diphosphate. Its pathway is amino-acid biosynthesis; S-adenosyl-L-methionine biosynthesis; S-adenosyl-L-methionine from L-methionine: step 1/1. Its function is as follows. Catalyzes the formation of S-adenosylmethionine (AdoMet) from methionine and ATP. The overall synthetic reaction is composed of two sequential steps, AdoMet formation and the subsequent tripolyphosphate hydrolysis which occurs prior to release of AdoMet from the enzyme. In Azobacteroides pseudotrichonymphae genomovar. CFP2, this protein is S-adenosylmethionine synthase.